Consider the following 230-residue polypeptide: Large ribosomal subunit protein uL1 (230 aa).

The protein belongs to the universal ribosomal protein uL1 family. As to quaternary structure, part of the 50S ribosomal subunit.

In terms of biological role, binds directly to 23S rRNA. The L1 stalk is quite mobile in the ribosome, and is involved in E site tRNA release. Functionally, protein L1 is also a translational repressor protein, it controls the translation of the L11 operon by binding to its mRNA. The chain is Large ribosomal subunit protein uL1 from Caldicellulosiruptor bescii (strain ATCC BAA-1888 / DSM 6725 / KCTC 15123 / Z-1320) (Anaerocellum thermophilum).